We begin with the raw amino-acid sequence, 182 residues long: MSIELIIGPMFSGKTTELMRKINRYILSNQKCVIITHNIDNRFINKNIINHDGNILNKEYLYIKTNNLINEINIVDNYDIIGIDECQFFEENDLEQFCDKMANNKKKVIVAGLNCDFNRNIFNSISKLIPKVEKIKKLQAICQFCYKDASFTIKKHNKNQIIEIGGQDLYVPVCRLCYNNSY.

8 to 15 serves as a coordination point for ATP; sequence GPMFSGKT. The active-site Proton acceptor is the glutamate 85. Phenylalanine 117 serves as a coordination point for substrate. 2 residues coordinate Zn(2+): cysteine 142 and cysteine 145. 161–165 contributes to the substrate binding site; sequence IIEIG. Cysteine 174 and cysteine 177 together coordinate Zn(2+).

Belongs to the thymidine kinase family.

The catalysed reaction is thymidine + ATP = dTMP + ADP + H(+). This Amsacta moorei entomopoxvirus (AmEPV) protein is Thymidine kinase (TK).